The chain runs to 265 residues: 14-3-3-like protein GF14 nu (265 aa).

A phosphoserine mark is found at S67, S109, and S190. T211 carries the phosphothreonine modification. A disordered region spans residues 242 to 265; it reads AGGDEIKEASKHEPEEGKPAETGQ. Residues 245–265 are compositionally biased toward basic and acidic residues; the sequence is DEIKEASKHEPEEGKPAETGQ.

Belongs to the 14-3-3 family. As to quaternary structure, component of the SERK1 signaling complex, composed of KAPP, CDC48A, GRF6 or GRF7, SERK1, SERK2, SERK3/BAK1 and BRI1. Interacts with DREB1A and DREB1B in the nucleus. Interacts with CINV1.

The protein localises to the nucleus. It localises to the cytoplasm. Is associated with a DNA binding complex that binds to the G box, a well-characterized cis-acting DNA regulatory element found in plant genes. The chain is 14-3-3-like protein GF14 nu (GRF7) from Arabidopsis thaliana (Mouse-ear cress).